The chain runs to 114 residues: Class I hydrophobin SC16 (114 aa).

A signal peptide spans 1–17 (MRFFATLVLALPALAMA). 4 disulfide bridges follow: Cys33–Cys93, Cys40–Cys87, Cys41–Cys74, and Cys94–Cys107. Asn42 is a glycosylation site (N-linked (GlcNAc...) asparagine).

This sequence belongs to the fungal hydrophobin family. As to quaternary structure, self-assembles to form functional amyloid fibrils called rodlets. Self-assembly into fibrillar rodlets occurs spontaneously at hydrophobic:hydrophilic interfaces and the rodlets further associate laterally to form amphipathic monolayers.

It is found in the secreted. Its subcellular location is the cell wall. Functionally, aerial growth, conidiation, and dispersal of filamentous fungi in the environment rely upon a capability of their secreting small amphipathic proteins called hydrophobins (HPBs) with low sequence identity. Class I can self-assemble into an outermost layer of rodlet bundles on aerial cell surfaces, conferring cellular hydrophobicity that supports fungal growth, development and dispersal; whereas Class II form highly ordered films at water-air interfaces through intermolecular interactions but contribute nothing to the rodlet structure. The sequence is that of Class I hydrophobin SC16 from Schizophyllum commune (strain H4-8 / FGSC 9210) (Split gill fungus).